A 344-amino-acid chain; its full sequence is Outer membrane protein assembly factor BamC (344 aa).

Positions 1 to 24 (MAYSVQKSRLAKVAGVSLVLLLAA) are cleaved as a signal peptide. Cys-25 carries N-palmitoyl cysteine lipidation. Cys-25 carries the S-diacylglycerol cysteine lipid modification.

This sequence belongs to the BamC family. Part of the Bam complex, which is composed of the outer membrane protein BamA, and four lipoproteins BamB, BamC, BamD and BamE. Forms a subcomplex with BamD and BamE. The Bam complex has the shape of a hat, with the BamA beta-barrel crown in the outer membrane and the periplasmic brim formed by the BamA POTRA domains and the 4 lipoproteins.

It is found in the cell outer membrane. Part of the outer membrane protein assembly complex (Bam), which is involved in assembly and insertion of beta-barrel proteins into the outer membrane. Nonessential member of the complex that stabilizes the interaction between the essential proteins BamA and BamD. Efficient substrate folding and insertion into the outer membrane requires all 5 subunits. A lateral gate may open between the first and last strands of the BamA beta-barrel that allows substrate to insert into the outer membrane; comparison of the structures of complete and nearly complete Bam complexes show there is considerable movement of all 5 proteins. The chain is Outer membrane protein assembly factor BamC from Escherichia coli (strain K12).